Reading from the N-terminus, the 416-residue chain is Pentraxin fusion protein (416 aa).

The N-terminal stretch at 1–14 (MKSLLLFLKSQVFG) is a signal peptide. Asn129 carries an N-linked (GlcNAc...) asparagine glycan. The disordered stretch occupies residues 184 to 206 (GTEASDSSESVDGTEAPASPESD). One can recognise a Pentraxin (PTX) domain in the interval 220–416 (TNKSFMFPKE…YSMIGNVAEV (197 aa)). An N-linked (GlcNAc...) asparagine glycan is attached at Asn221. A disulfide bridge links Cys251 with Cys311. Residues Asp275, Gln353, Asp354, and Gln364 each coordinate Ca(2+).

Requires Ca(2+) as cofactor.

This is Pentraxin fusion protein (pxn1) from Xenopus laevis (African clawed frog).